We begin with the raw amino-acid sequence, 141 residues long: HTH-type transcriptional repressor NsrR (141 aa).

The HTH rrf2-type domain maps to 2 to 129 (QLTSFTDYGL…DNYTLADLVE (128 aa)). The H-T-H motif DNA-binding region spans 28 to 51 (ISEVTEVYGVSRNHMVKIINQLSR). [2Fe-2S] cluster contacts are provided by C91, C96, and C102.

Requires [2Fe-2S] cluster as cofactor.

Functionally, nitric oxide-sensitive repressor of genes involved in protecting the cell against nitrosative stress. May require iron for activity. The sequence is that of HTH-type transcriptional repressor NsrR from Klebsiella pneumoniae subsp. pneumoniae (strain ATCC 700721 / MGH 78578).